The primary structure comprises 349 residues: Small ribosomal subunit biogenesis GTPase RsgA (349 aa).

Residues 1-11 show a composition bias toward basic residues; sequence MSKKKLSKGQQ. The disordered stretch occupies residues 1–29; that stretch reads MSKKKLSKGQQRRVSANHQRRLKKTESKV. Positions 102–272 constitute a CP-type G domain; sequence HSVLTRPDYY…VIDSPGVREF (171 aa). Residues 158-161 and 212-220 each bind GTP; these read NKID and GQSGVGKSS. C296, C301, H303, and C309 together coordinate Zn(2+).

The protein belongs to the TRAFAC class YlqF/YawG GTPase family. RsgA subfamily. As to quaternary structure, monomer. Associates with 30S ribosomal subunit, binds 16S rRNA. Zn(2+) is required as a cofactor.

Its subcellular location is the cytoplasm. Functionally, one of several proteins that assist in the late maturation steps of the functional core of the 30S ribosomal subunit. Helps release RbfA from mature subunits. May play a role in the assembly of ribosomal proteins into the subunit. Circularly permuted GTPase that catalyzes slow GTP hydrolysis, GTPase activity is stimulated by the 30S ribosomal subunit. This is Small ribosomal subunit biogenesis GTPase RsgA from Pectobacterium atrosepticum (strain SCRI 1043 / ATCC BAA-672) (Erwinia carotovora subsp. atroseptica).